Reading from the N-terminus, the 37-residue chain is Omega-conotoxin-like S6.7 (37 aa).

A propeptide spanning residues Lys1–Ser4 is cleaved from the precursor. 3 cysteine pairs are disulfide-bonded: Cys5–Cys20, Cys12–Cys23, and Cys19–Cys32.

Belongs to the conotoxin O1 superfamily. As to expression, expressed by the venom duct.

The protein localises to the secreted. In terms of biological role, omega-conotoxins act at presynaptic membranes, they bind and block voltage-gated calcium channels (Cav). This toxin blocks N-, P- and Q-type calcium channels. This chain is Omega-conotoxin-like S6.7, found in Conus striatus (Striated cone).